The sequence spans 284 residues: Hemin import ATP-binding protein HmuV (284 aa).

An ABC transporter domain is found at 33–266; the sequence is LGARHLSKSY…KLLSDVYSYE (234 aa). ATP is bound at residue 65–72; it reads GPNGAGKS.

It belongs to the ABC transporter superfamily. Heme (hemin) importer (TC 3.A.1.14.5) family. The complex is composed of two ATP-binding proteins (HmuV), two transmembrane proteins (HmuU) and a solute-binding protein (HmuT).

The protein localises to the cell membrane. In terms of biological role, part of the ABC transporter complex HmuTUV involved in hemin import. Responsible for energy coupling to the transport system. The chain is Hemin import ATP-binding protein HmuV from Thermobifida fusca (strain YX).